The sequence spans 349 residues: Flap endonuclease 1-B (349 aa).

The N-domain stretch occupies residues 1 to 105; the sequence is MGIKGLTKLL…GELAKRLARR (105 aa). Aspartate 34 is a binding site for Mg(2+). Arginine 71 provides a ligand contact to DNA. Mg(2+)-binding residues include aspartate 87, glutamate 159, glutamate 161, aspartate 180, and aspartate 182. Residues 123–254 form an I-domain region; that stretch reads DMEKYSKRTV…QTALKLIRQH (132 aa). Glutamate 159 lines the DNA pocket. Residues glycine 232 and aspartate 234 each contribute to the DNA site. Aspartate 234 is a binding site for Mg(2+).

The protein belongs to the XPG/RAD2 endonuclease family. FEN1 subfamily. As to quaternary structure, interacts with PCNA. Three molecules of FEN1 bind to one PCNA trimer with each molecule binding to one PCNA monomer. PCNA stimulates the nuclease activity without altering cleavage specificity. Requires Mg(2+) as cofactor. Post-translationally, phosphorylated. Phosphorylation upon DNA damage induces relocalization to the nuclear plasma.

Its subcellular location is the nucleus. It localises to the nucleolus. It is found in the nucleoplasm. The protein localises to the mitochondrion. Structure-specific nuclease with 5'-flap endonuclease and 5'-3' exonuclease activities involved in DNA replication and repair. During DNA replication, cleaves the 5'-overhanging flap structure that is generated by displacement synthesis when DNA polymerase encounters the 5'-end of a downstream Okazaki fragment. It enters the flap from the 5'-end and then tracks to cleave the flap base, leaving a nick for ligation. Also involved in the long patch base excision repair (LP-BER) pathway, by cleaving within the apurinic/apyrimidinic (AP) site-terminated flap. Acts as a genome stabilization factor that prevents flaps from equilibrating into structures that lead to duplications and deletions. Also possesses 5'-3' exonuclease activity on nicked or gapped double-stranded DNA, and exhibits RNase H activity. Also involved in replication and repair of rDNA and in repairing mitochondrial DNA. This chain is Flap endonuclease 1-B, found in Physcomitrium patens (Spreading-leaved earth moss).